Reading from the N-terminus, the 296-residue chain is HVA22-like protein i (296 aa).

Residues serine 146–arginine 296 are disordered. The span at valine 180–asparagine 193 shows a compositional bias: low complexity. Residues alanine 223–valine 233 show a composition bias toward polar residues. Residues glutamine 251–serine 261 are compositionally biased toward acidic residues. Residues glycine 270–arginine 281 are compositionally biased toward basic and acidic residues.

The protein belongs to the DP1 family.

This chain is HVA22-like protein i (HVA22I), found in Arabidopsis thaliana (Mouse-ear cress).